A 477-amino-acid polypeptide reads, in one-letter code: ETS translocation variant 1 (477 aa).

At Ser94 the chain carries Phosphoserine. The segment at 128-178 (PQVGMRPSNPPTPSSTPVSPLHHASPNSAHTSKPDRAFPAHLPPSQPIQDS) is disordered. Ser191 and Ser216 each carry phosphoserine; by RPS6KA1 and RPS6KA5. Lys317 participates in a covalent cross-link: Glycyl lysine isopeptide (Lys-Gly) (interchain with G-Cter in SUMO2). The ETS DNA-binding region spans 335-415 (LQLWQFLVAL…AGERYVYKFV (81 aa)).

Belongs to the ETS family. Sumoylated. Post-translationally, phosphorylated at Ser-191 and Ser-216 by RPS6KA1 and RPS6KA5; phosphorylation activates transcriptional activity.

The protein localises to the nucleus. Transcriptional activator that binds to DNA sequences containing the consensus pentanucleotide 5'-CGGA[AT]-3'. Required for olfactory dopaminergic neuron differentiation; may directly activate expression of tyrosine hydroxylase (TH). This chain is ETS translocation variant 1 (ETV1), found in Bos taurus (Bovine).